Here is a 101-residue protein sequence, read N- to C-terminus: MAKQSMKAREVVRVKLANKYRAKREELKAIISGVNSSDEDRWDAVLKLQSLPRDSSPSRQRNRCNQTGRPHGFLRKFGLSRIKVRETAMRGEIPGLKKASW.

The segment at 49 to 70 is disordered; it reads QSLPRDSSPSRQRNRCNQTGRP. The segment covering 52–68 has biased composition (polar residues); sequence PRDSSPSRQRNRCNQTG.

The protein belongs to the universal ribosomal protein uS14 family. Part of the 30S ribosomal subunit. Contacts proteins S3 and S10.

In terms of biological role, binds 16S rRNA, required for the assembly of 30S particles and may also be responsible for determining the conformation of the 16S rRNA at the A site. The polypeptide is Small ribosomal subunit protein uS14 (Yersinia pseudotuberculosis serotype O:1b (strain IP 31758)).